The primary structure comprises 210 residues: Synaptosomal-associated protein 23 (210 aa).

At M1 the chain carries N-acetylmethionine. A phosphoserine mark is found at S5, S20, S23, and S34. Residues 14–76 enclose the t-SNARE coiled-coil homology 1 domain; that stretch reads HQVTDESLES…REAEKTLTEL (63 aa). Positions 23–76 form a coiled coil; it reads STRRILGLAIESQDAGIKTITMLDEQGEQLNRIEEGMDQINKDMREAEKTLTEL. S-palmitoyl cysteine attachment occurs at residues C79, C80, C83, C85, and C87. The disordered stretch occupies residues 104–135; it reads GDGGDNSPSNVVSKQPSRITNGQPQQTTGAAS. The span at 109–133 shows a compositional bias: polar residues; sequence NSPSNVVSKQPSRITNGQPQQTTGA. A phosphoserine mark is found at S110 and S160. Positions 145 to 207 constitute a t-SNARE coiled-coil homology 2 domain; that stretch reads DAREDEMEEN…DIANTRAKKL (63 aa).

This sequence belongs to the SNAP-25 family. Homotetramer (via coiled-coil domain), also forms heterotetramers with STX4 and VAMP3. Found in a complex with VAMP8 and STX1A. Found in a complex with VAMP8 and STX4 in pancreas. Interacts simultaneously with SNAPIN and SYN4. Interacts with STX1A. Interacts with STX12. Interacts tightly to multiple syntaxins and synaptobrevins/VAMPs. Interacts with ZDHHC13 (via ANK repeats). Interacts with ZDHHC17 (via ANK repeats). Post-translationally, (Microbial infection) Targeted and hydrolyzed by C.botulinum neurotoxin type A (BoNT/A, botA) which hydrolyzes the 202-Thr-|-Arg-203 bond; the in vitro reaction is not highly efficient. In terms of processing, (Microbial infection) Targeted and hydrolyzed by C.botulinum neurotoxin type E (BoNT/E) which hydrolyzes the 185-Arg-|-Ile-186 bond; the in vitro reaction is more efficient than that of BoNT/A. As to expression, expressed in non-neuronal tissues.

The protein localises to the cell membrane. It localises to the synapse. It is found in the synaptosome. Functionally, essential component of the high affinity receptor for the general membrane fusion machinery and an important regulator of transport vesicle docking and fusion. This is Synaptosomal-associated protein 23 (Snap23) from Mus musculus (Mouse).